A 615-amino-acid chain; its full sequence is Nuclear receptor subfamily 1 group D member 1 (615 aa).

Over residues 1–12 (MTTLDSNNNTGG) the composition is skewed to polar residues. The interval 1–70 (MTTLDSNNNT…TQDPARSFGS (70 aa)) is required for phosphorylation by CSNK1E and cytoplasmic localization. A disordered region spans residues 1 to 120 (MTTLDSNNNT…SSRVSPSKGT (120 aa)). Residues 1-129 (MTTLDSNNNT…TSNITKLNGM (129 aa)) are modulating. Residues 14 to 34 (ITYIGSSGSSPSRTSPESLYS) are compositionally biased toward low complexity. Positions 35 to 48 (DSSNGSFQSLTQGC) are enriched in polar residues. Positions 49-285 (PTYFPPSPTG…PPRSPSPEPT (237 aa)) are crucial for activation of GJA1. Ser-55 and Ser-59 each carry phosphoserine; by GSK3-beta. Residues 70–94 (SAPPSLSDDSSPSSASSSSSSSSSS) show a composition bias toward low complexity. A DNA-binding region (nuclear receptor) is located at residues 130 to 206 (VLLCKVCGDV…VGMSRDAVRF (77 aa)). 2 consecutive NR C4-type zinc fingers follow at residues 133-153 (CKVC…CEGC) and 170-194 (CLKN…FKKC). Lys-192 and Lys-193 each carry N6-acetyllysine; by KAT5. Disordered regions lie at residues 235–286 (LCPL…EPTM) and 312–337 (PGNF…SQGC). The segment covering 240–252 (TSPTPHPTSGSMG) has biased composition (low complexity). Residues 253-262 (PSPPPAPAPT) are compositionally biased toward pro residues. Thr-275 is subject to Phosphothreonine; by CDK1. Residues 285–615 (TMEDVISQVA…KLLSFRVDAQ (331 aa)) form the NR LBD domain. Over residues 312–328 (PGNFNANHASGSPSATT) the composition is skewed to polar residues. Cys-419 is a heme binding site. N6-acetyllysine is present on Lys-592. His-603 serves as a coordination point for heme.

The protein belongs to the nuclear hormone receptor family. NR1 subfamily. Binds DNA as a monomer or a homodimer. Interacts with NR2E3 and ZNHIT1. Interacts with C1D. Interacts with SP1. Interacts with OPHN1 (via C-terminus). Interacts with PER2; the interaction associates PER2 to BMAL1 promoter region. Interacts with CRY1. Interacts with CCAR2. Interacts with SIAH2. Interacts with FBXW7 and CDK1. Interacts with HUWE1. Interacts with NR0B2. Interacts with NFIL3. Interacts (via domain NR LBD) with HSP90AA1 and HSP90AB1. Post-translationally, ubiquitinated, leading to its proteasomal degradation. Ubiquitinated by the SCF(FBXW7) complex when phosphorylated by CDK1 leading to its proteasomal degradation. Ubiquitinated by SIAH2; leading to its proteasomal degradation. Rapidly ubiquitinated in response to inflammatory triggers and sumoylation is a prerequisite to its ubiquitination. In terms of processing, sumoylated by UBE2I, desumoylated by SENP1, and sumoylation is a prerequisite to its ubiquitination. Phosphorylated by CSNK1E; phosphorylation enhances its cytoplasmic localization. Post-translationally, undergoes lysosome-mediated degradation in a time-dependent manner in the liver. Expressed during adipocyte differentiation (at protein level). Expressed in skeletal muscle, bladder, lumbar spinal cord, pancreatic islets and hypothalamus. Expressed in developing and adult retina. In the adult retina, predominantly expressed in the outer nuclear layer, where rod and cone cells reside, and also localized to the ganglion cell layer. Expressed in a circadian manner in the liver. Expressed in a circadian manner in the lung with a peak between ZT8 and ZT12.

It localises to the nucleus. It is found in the cytoplasm. Its subcellular location is the cell projection. The protein localises to the dendrite. The protein resides in the dendritic spine. Its function is as follows. Transcriptional repressor which coordinates circadian rhythm and metabolic pathways in a heme-dependent manner. Integral component of the complex transcription machinery that governs circadian rhythmicity and forms a critical negative limb of the circadian clock by directly repressing the expression of core clock components BMAL1, CLOCK and CRY1. Also regulates genes involved in metabolic functions, including lipid and bile acid metabolism, adipogenesis, gluconeogenesis and the macrophage inflammatory response. Acts as a receptor for heme which stimulates its interaction with the NCOR1/HDAC3 corepressor complex, enhancing transcriptional repression. Recognizes two classes of DNA response elements within the promoter of its target genes and can bind to DNA as either monomers or homodimers, depending on the nature of the response element. Binds as a monomer to a response element composed of the consensus half-site motif 5'-[A/G]GGTCA-3' preceded by an A/T-rich 5' sequence (RevRE), or as a homodimer to a direct repeat of the core motif spaced by two nucleotides (RevDR-2). Acts as a potent competitive repressor of ROR alpha (RORA) function and regulates the levels of its ligand heme by repressing the expression of PPARGC1A, a potent inducer of heme synthesis. Regulates lipid metabolism by repressing the expression of APOC3 and by influencing the activity of sterol response element binding proteins (SREBPs); represses INSIG2 which interferes with the proteolytic activation of SREBPs which in turn govern the rhythmic expression of enzymes with key functions in sterol and fatty acid synthesis. Regulates gluconeogenesis via repression of G6PC1 and PEPCK and adipocyte differentiation via repression of PPARG. Regulates glucagon release in pancreatic alpha-cells via the AMPK-NAMPT-SIRT1 pathway and the proliferation, glucose-induced insulin secretion and expression of key lipogenic genes in pancreatic-beta cells. Positively regulates bile acid synthesis by increasing hepatic expression of CYP7A1 via repression of NR0B2 and NFIL3 which are negative regulators of CYP7A1. Modulates skeletal muscle oxidative capacity by regulating mitochondrial biogenesis and autophagy; controls mitochondrial biogenesis and respiration by interfering with the STK11-PRKAA1/2-SIRT1-PPARGC1A signaling pathway. Represses the expression of SERPINE1/PAI1, an important modulator of cardiovascular disease and the expression of inflammatory cytokines and chemokines in macrophages. Represses gene expression at a distance in macrophages by inhibiting the transcription of enhancer-derived RNAs (eRNAs). Plays a role in the circadian regulation of body temperature and negatively regulates thermogenic transcriptional programs in brown adipose tissue (BAT); imposes a circadian oscillation in BAT activity, increasing body temperature when awake and depressing thermogenesis during sleep. In concert with NR2E3, regulates transcriptional networks critical for photoreceptor development and function. In addition to its activity as a repressor, can also act as a transcriptional activator. In the ovarian granulosa cells acts as a transcriptional activator of STAR which plays a role in steroid biosynthesis. In collaboration with SP1, activates GJA1 transcription in a heme-independent manner. Represses the transcription of CYP2B10, CYP4A10 and CYP4A14. Represses the transcription of CES2. Represses and regulates the circadian expression of TSHB in a NCOR1-dependent manner. Negatively regulates the protein stability of NR3C1 and influences the time-dependent subcellular distribution of NR3C1, thereby affecting its transcriptional regulatory activity. Plays a critical role in the circadian control of neutrophilic inflammation in the lung; under resting, non-stress conditions, acts as a rhythmic repressor to limit inflammatory activity whereas in the presence of inflammatory triggers undergoes ubiquitin-mediated degradation thereby relieving inhibition of the inflammatory response. Plays a key role in the circadian regulation of microglial activation and neuroinflammation; suppresses microglial activation through the NF-kappaB pathway in the central nervous system. Plays a role in the regulation of the diurnal rhythms of lipid and protein metabolism in the skeletal muscle via transcriptional repression of genes controlling lipid and amino acid metabolism in the muscle. This Mus musculus (Mouse) protein is Nuclear receptor subfamily 1 group D member 1 (Nr1d1).